The primary structure comprises 105 residues: Large ribosomal subunit protein bL21 (105 aa).

Belongs to the bacterial ribosomal protein bL21 family. As to quaternary structure, part of the 50S ribosomal subunit. Contacts protein L20.

Functionally, this protein binds to 23S rRNA in the presence of protein L20. The polypeptide is Large ribosomal subunit protein bL21 (Thermotoga maritima (strain ATCC 43589 / DSM 3109 / JCM 10099 / NBRC 100826 / MSB8)).